A 132-amino-acid polypeptide reads, in one-letter code: Glycerol-3-phosphate cytidylyltransferase (132 aa).

CTP contacts are provided by residues 9–10 (TY) and 14–17 (HYGH). Position 44 (lysine 44) interacts with substrate. Residue lysine 46 participates in CTP binding. Lysine 77 is a binding site for substrate. 113-120 (RTEGISTT) serves as a coordination point for CTP.

It belongs to the cytidylyltransferase family. As to quaternary structure, homotetramer or homodimer.

It localises to the cytoplasm. The catalysed reaction is sn-glycerol 3-phosphate + CTP + H(+) = CDP-glycerol + diphosphate. It participates in cell wall biogenesis; poly(ribitol phosphate) teichoic acid biosynthesis. Its function is as follows. Catalyzes the transfer of the cytidylyl group of CTP to sn-glycerol 3-phosphate so the activated glycerol 3-phosphate can be used for teichoic acid synthesis, via incorporation into both the linkage unit by TarB and TarF. This is Glycerol-3-phosphate cytidylyltransferase from Staphylococcus aureus (strain NCTC 8325 / PS 47).